A 123-amino-acid chain; its full sequence is Small ribosomal subunit protein uS13c (123 aa).

The segment at Gly99–Lys123 is disordered. Positions Gln100–Lys123 are enriched in basic residues.

It belongs to the universal ribosomal protein uS13 family. As to quaternary structure, part of the 30S ribosomal subunit.

The protein localises to the plastid. It localises to the chloroplast. Functionally, located at the top of the head of the 30S subunit, it contacts several helices of the 16S rRNA. This chain is Small ribosomal subunit protein uS13c, found in Cyanidioschyzon merolae (strain NIES-3377 / 10D) (Unicellular red alga).